Reading from the N-terminus, the 349-residue chain is Fructose-1,6-bisphosphatase class 1 (349 aa).

4 residues coordinate Mg(2+): glutamate 91, aspartate 110, leucine 112, and aspartate 113. Substrate is bound by residues 113–116 (DGSS) and asparagine 205. Glutamate 277 is a Mg(2+) binding site.

This sequence belongs to the FBPase class 1 family. Homotetramer. Mg(2+) serves as cofactor.

It localises to the cytoplasm. It catalyses the reaction beta-D-fructose 1,6-bisphosphate + H2O = beta-D-fructose 6-phosphate + phosphate. The protein operates within carbohydrate biosynthesis; gluconeogenesis. In Sinorhizobium medicae (strain WSM419) (Ensifer medicae), this protein is Fructose-1,6-bisphosphatase class 1.